Here is an 842-residue protein sequence, read N- to C-terminus: Leucine--tRNA ligase (842 aa).

The 'HIGH' region motif lies at 44 to 55 (PYPSANGLHVGH). Positions 619–623 (KMSKS) match the 'KMSKS' region motif. Residue Lys-622 coordinates ATP.

It belongs to the class-I aminoacyl-tRNA synthetase family.

Its subcellular location is the cytoplasm. The enzyme catalyses tRNA(Leu) + L-leucine + ATP = L-leucyl-tRNA(Leu) + AMP + diphosphate. The sequence is that of Leucine--tRNA ligase from Borrelia duttonii (strain Ly).